The following is a 581-amino-acid chain: Sulfate adenylyltransferase (581 aa).

Residues 1–176 (MANAPHGGVL…VQAIQAPTHF (176 aa)) form an N-terminal region. The segment at 177 to 401 (DYVPLRYTPA…LRESYPPRPQ (225 aa)) is catalytic. Glutamine 204 contacts sulfate. Residues 204–207 (QTRN) and 298–301 (GRDH) contribute to the ATP site. Residues threonine 205, arginine 206, and asparagine 207 contribute to the active site. Arginine 206 is a binding site for sulfate. Position 302 (alanine 302) interacts with sulfate. Residue methionine 340 coordinates ATP. The tract at residues 402 to 581 (QGFTILLTGL…IMILESQNLV (180 aa)) is allosteric regulation domain; adenylyl-sulfate kinase-like. 3'-phosphoadenylyl sulfate is bound by residues 441–444 (EELR), 486–487 (TA), and arginine 526.

In the N-terminal section; belongs to the sulfate adenylyltransferase family. The protein in the C-terminal section; belongs to the APS kinase family. In terms of assembly, homohexamer. Dimer of trimers.

It localises to the cytoplasm. The enzyme catalyses sulfate + ATP + H(+) = adenosine 5'-phosphosulfate + diphosphate. It participates in sulfur metabolism; hydrogen sulfide biosynthesis; sulfite from sulfate: step 1/3. Allosterically inhibited by 3'-phosphoadenosine 5'-phosphosulfate (PAPS). Its function is as follows. Catalyzes the first intracellular reaction of sulfate assimilation, forming adenosine-5'-phosphosulfate (APS) from inorganic sulfate and ATP. Plays an important role in sulfate activation as a component of the biosynthesis pathway of sulfur-containing amino acids. The chain is Sulfate adenylyltransferase from Cryptococcus neoformans var. grubii serotype A (strain H99 / ATCC 208821 / CBS 10515 / FGSC 9487) (Filobasidiella neoformans var. grubii).